The following is a 493-amino-acid chain: Cytochrome P450 2W1 (493 aa).

Positions 1–23 (MALLLLGVWGILLLLGLWGLLQG) are cleaved as a signal peptide. N-linked (GlcNAc...) asparagine glycosylation occurs at Asn180. Cys436 contributes to the heme binding site.

The protein belongs to the cytochrome P450 family. Heme is required as a cofactor. In terms of tissue distribution, detected in colon, ileum, and testes.

Its subcellular location is the endoplasmic reticulum lumen. The protein localises to the cell membrane. It localises to the microsome membrane. The catalysed reaction is all-trans-retinoate + reduced [NADPH--hemoprotein reductase] + O2 = all-trans-4-hydroxyretinoate + oxidized [NADPH--hemoprotein reductase] + H2O + H(+). It catalyses the reaction 1-(9Z-octadecenoyl)-sn-glycero-3-phosphocholine + reduced [NADPH--hemoprotein reductase] + O2 = 1-[8-hydroxy-(9Z)-octadecenoyl]-sn-glycero-3-phosphocholine + oxidized [NADPH--hemoprotein reductase] + H2O + H(+). The enzyme catalyses 1-(9Z-octadecenoyl)-sn-glycero-3-phosphocholine + reduced [NADPH--hemoprotein reductase] + O2 = 1-[11-hydroxy-(9Z)-octadecenoyl]-sn-glycero-3-phosphocholine + oxidized [NADPH--hemoprotein reductase] + H2O + H(+). It carries out the reaction 1-(9Z-octadecenoyl)-sn-glycero-3-phosphocholine + reduced [NADPH--hemoprotein reductase] + O2 = 1-[(9S,10R)-epoxy-octadecanoyl]-sn-glycero-3-phosphocholine + oxidized [NADPH--hemoprotein reductase] + H2O + H(+). The catalysed reaction is 1-(9Z-octadecenoyl)-sn-glycero-3-phosphocholine + reduced [NADPH--hemoprotein reductase] + O2 = 1-[(9R,10S)-epoxy-octadecanoyl]-sn-glycero-3-phosphocholine + oxidized [NADPH--hemoprotein reductase] + H2O + H(+). Its function is as follows. A cytochrome P450 monooxygenase that may play a role in retinoid and phospholipid metabolism. Catalyzes the hydroxylation of saturated carbon hydrogen bonds. Hydroxylates all trans-retinoic acid (atRA) to 4-hydroxyretinoate and may regulate atRA clearance. Other retinoids such as all-trans retinol and all-trans retinal are potential endogenous substrates. Catalyzes both epoxidation of double bonds and hydroxylation of carbon hydrogen bonds of the fatty acyl chain of 1-acylphospholipids/2-lysophospholipids. Can metabolize various lysophospholipids classes including lysophosphatidylcholines (LPCs), lysophosphatidylinositols (LPIs), lysophosphatidylserines (LPSs), lysophosphatidylglycerols (LPGs), lysophosphatidylethanolamines (LPEs) and lysophosphatidic acids (LPAs). Has low or no activity toward 2-acylphospholipids/1-lysophospholipids, diacylphospholipids and free fatty acids. May play a role in tumorigenesis by activating procarcinogens such as aflatoxin B1, polycyclic aromatic hydrocarbon dihydrodiols and aromatic amines. Mechanistically, uses molecular oxygen inserting one oxygen atom into a substrate, and reducing the second into a water molecule, with two electrons provided by NADPH via cytochrome P450 reductase (CPR; NADPH-ferrihemoprotein reductase). This is Cytochrome P450 2W1 (Cyp2w1) from Mus musculus (Mouse).